A 408-amino-acid polypeptide reads, in one-letter code: MQIPSKLKPYYENIAFEQEDSKMIINLGPQHPSAHGNLRLILELDGEQVVKARPCIGYMHRGMEKMAENMIYQEFIPTTDRMDYIAASANNYAYCAAVEKLCGLEIPRRAAVIRMILLELNRITSHLLWLATHALDIGAMSVFLYCFREREYVLDLIEKYCGARLTHSSMRIGGVMLDLPENYLEEMLAFCDKFPNDLKDYEDLLDDNRIWRLRTENVGVVTKEQALNWGCTGVMLRGSGIKYDIRKEEPYLLYNEVEFGVPYATQGDSYARYKVYMQEFRESLKILRQCAMLYKDTSPEILATHPEYVSASKEQILTQNYSLMQHFVLITQGLKPPKGEVYVPTESPKGELGFFIHSDGTERPYRLKARTPSYWHCAFFEEMLVGTYLADVVAIMGNVNIVLGEIDR.

It belongs to the complex I 49 kDa subunit family. As to quaternary structure, NDH-1 is composed of 14 different subunits. Subunits NuoB, C, D, E, F, and G constitute the peripheral sector of the complex.

It localises to the cell inner membrane. The catalysed reaction is a quinone + NADH + 5 H(+)(in) = a quinol + NAD(+) + 4 H(+)(out). In terms of biological role, NDH-1 shuttles electrons from NADH, via FMN and iron-sulfur (Fe-S) centers, to quinones in the respiratory chain. The immediate electron acceptor for the enzyme in this species is believed to be ubiquinone. Couples the redox reaction to proton translocation (for every two electrons transferred, four hydrogen ions are translocated across the cytoplasmic membrane), and thus conserves the redox energy in a proton gradient. In Campylobacter jejuni subsp. jejuni serotype O:23/36 (strain 81-176), this protein is NADH-quinone oxidoreductase subunit D.